The primary structure comprises 917 residues: MATDSLGTLTVDLIANTGGFERGMDAAERRIASTTRAFQRQEQAAERLVGRIDPVAGAINRLVQEQTELERHFRSGIIPAGEFERLNRILNDQLDAVQRGNREMASGAMSARQYQAALRGVPAQFTDIAVSLASGQQPLTVLLQQGGQLKDMFGGVVPAARALGGYIAGLVNPITGLAASVGVLGISFIDAEREAAAFNKAIFAGNNAAGVSGSGLSQIAEQASAVAGSLSSANKAAIALASSGKVAASQLQSLTEATIAIAQFTGKEVDDVAKSLSAMGDSATDAAAKISEQYGLLTYEQYQVIKSIDEQGNSQRALDVLGEELNRNAQERLKQYRESLSDIERDWIDIKTAITNSYAAVRSEIFPNQNQQIEQIQRILRTRQEGGVLGAVSSAFGFGENSTESLQQQLDSLVKQRDAAAKQAEEQAKITKSNQDRVDASREWEKENEKYLSSRVKMEKEISAARELGRKAGLNEIEIEDRIAQIRKSYEEKPSSRSGSLDAGQRMLDSLRQQYASMQAQLEATEKLGTQAQALVKWEQQLADLKSRGSLSADQKALLANADLITAQLKRNAALEDELNTRKEIQKTLDDYKRLNESLRTDAEKQLDLTRQRFEILDKARQAGISDDDYRRTAERIVSSSTTKAPTFSGVDAVVAGPQGELDKLDKAQEDLEAWYEQQLEILNENREKRAELNASWDEQELKLKQEHEDAMAAIEQSRQQITLSANEQFFGNLSGLAKTFFGEQSGLYKAAFVAEKSFAIAKTLINVPKTASDAYSAMAGIPVIGPALGIAAAAAAVTAQLAQVAAVKNVNLSGMAHDGIDAVPETGTWLLQKGERVTTAETSAKLDKTLDDVRSNQSGGGAPTINLIEDRSRAGQVNTRRQDDQYIIDVVVADLFGDGRTSKAIGSSFGMRRSGT.

Coiled coils occupy residues 501-528 (LDAGQRMLDSLRQQYASMQAQLEATEKL) and 575-602 (LEDELNTRKEIQKTLDDYKRLNESLRTD). Residues 852–877 (DDVRSNQSGGGAPTINLIEDRSRAGQ) form a disordered region.

It belongs to the Lambdavirus tape measure protein family. Interacts with the tail initiator complex presumably through its C-terminus domain. Interacts with the tail assembly proteins.

It is found in the virion. Its function is as follows. Serves as a ruler that controls the length of tail by stopping the tail tube polymerization and is probably released from the tail shaft during infection to facilitate DNA translocation into the host cell. Assembles into a multimeric linear form probably arranged as a coil of alpha-helices and stabilized by the covering tail assembly proteins. Its C-terminus fixes the tail tip complex, thereby forming the tail assembly initiator complex. Tail tube proteins polymerize around the tape measure protein, displacing the tail assembly proteins. When the tail reaches the length specified by the tape measure protein, it stops and becomes capped by the tail terminator protein. The polypeptide is Tape measure protein (Pseudomonas phage PAJU2).